The primary structure comprises 353 residues: MSDAQKFQLGTIGALSLSVVSSVSIVICNKALISTLGFTFATTLTSWHLLVTFCSLHVALWMKFFEHKPFDPRAVLGFGVLNGISIGLLNLSLGFNSVGFYQMTKLAIIPCTVVLETIFFRKMFSRKIQFSLVILLLGVGIATVTDLQLNMLGSVLSLLAVITTCVAQIMTNTIQKKYKVSSTQLLYQSCPYQAITLFVTGPFLDGLLTNQNVFAFKYTSQVVFFIVLSCLISVSVNFSTFLVIGKTSPVTYQVLGHLKTCLVLAFGYLLLKDAFSWRNILGILVAVIGMVLYSYYCTLETQQKATETSTQLPQMDENEKDPLVSAENGSGLISDNGVQKQDPVWNSNKDFQA.

The next 10 helical transmembrane spans lie at 7–27, 31–51, 75–95, 100–120, 132–152, 154–174, 194–214, 224–244, 250–270, and 280–300; these read FQLG…SIVI, ALIS…HLLV, VLGF…SLGF, FYQM…TIFF, LVIL…LNML, SVLS…TNTI, AITL…QNVF, FFIV…FLVI, VTYQ…GYLL, and ILGI…CTLE. The segment at 308–353 is disordered; the sequence is TSTQLPQMDENEKDPLVSAENGSGLISDNGVQKQDPVWNSNKDFQA. A compositionally biased stretch (polar residues) spans 327–353; the sequence is ENGSGLISDNGVQKQDPVWNSNKDFQA. Position 334 is a phosphoserine (serine 334).

Belongs to the TPT transporter family. TPT (TC 2.A.7.9) subfamily. Ubiquitous.

The protein resides in the golgi apparatus membrane. Functionally, nucleotide-sugar transporter that transports UDP-xylose and UMP in a strict counter-exchange mode. This Arabidopsis thaliana (Mouse-ear cress) protein is UDP-xylose transporter 2.